Here is a 570-residue protein sequence, read N- to C-terminus: Hydroxylamine reductase (570 aa).

Residues Cys-5, Cys-8, Cys-17, and Cys-23 each coordinate [4Fe-4S] cluster. Residues His-266, Glu-290, Cys-334, Cys-425, Cys-453, Cys-478, Glu-513, and Lys-515 each contribute to the hybrid [4Fe-2O-2S] cluster site. Position 425 is a cysteine persulfide (Cys-425).

Belongs to the HCP family. The cofactor is [4Fe-4S] cluster. Hybrid [4Fe-2O-2S] cluster serves as cofactor.

It is found in the cytoplasm. It carries out the reaction A + NH4(+) + H2O = hydroxylamine + AH2 + H(+). Functionally, catalyzes the reduction of hydroxylamine to form NH(3) and H(2)O. This is Hydroxylamine reductase from Clostridium tetani (strain Massachusetts / E88).